The chain runs to 439 residues: Glucose-6-phosphate 1-dehydrogenase (439 aa).

Lys-100 is a binding site for NADP(+). Substrate is bound by residues His-130, Lys-134, Glu-168, and Asp-187. The active-site Proton acceptor is His-192. Residue Lys-288 participates in substrate binding.

It belongs to the glucose-6-phosphate dehydrogenase family.

The enzyme catalyses D-glucose 6-phosphate + NADP(+) = 6-phospho-D-glucono-1,5-lactone + NADPH + H(+). The protein operates within carbohydrate degradation; pentose phosphate pathway; D-ribulose 5-phosphate from D-glucose 6-phosphate (oxidative stage): step 1/3. Catalyzes the oxidation of glucose 6-phosphate to 6-phosphogluconolactone. In Chlamydia trachomatis serovar D (strain ATCC VR-885 / DSM 19411 / UW-3/Cx), this protein is Glucose-6-phosphate 1-dehydrogenase.